The primary structure comprises 814 residues: Valine--tRNA ligase (814 aa).

Positions 46 to 56 (PTVSGQLHIGH) match the 'HIGH' region motif. Residues 536 to 540 (KMSKS) carry the 'KMSKS' region motif. Lysine 539 contacts ATP.

The protein belongs to the class-I aminoacyl-tRNA synthetase family. ValS type 2 subfamily. Monomer.

The protein localises to the cytoplasm. It carries out the reaction tRNA(Val) + L-valine + ATP = L-valyl-tRNA(Val) + AMP + diphosphate. Functionally, catalyzes the attachment of valine to tRNA(Val). As ValRS can inadvertently accommodate and process structurally similar amino acids such as threonine, to avoid such errors, it has a 'posttransfer' editing activity that hydrolyzes mischarged Thr-tRNA(Val) in a tRNA-dependent manner. In Rickettsia prowazekii (strain Madrid E), this protein is Valine--tRNA ligase.